Here is a 511-residue protein sequence, read N- to C-terminus: Phosphoenolpyruvate carboxylase (511 aa).

This sequence belongs to the PEPCase type 2 family. Homotetramer. Mg(2+) is required as a cofactor.

It catalyses the reaction oxaloacetate + phosphate = phosphoenolpyruvate + hydrogencarbonate. In terms of biological role, catalyzes the irreversible beta-carboxylation of phosphoenolpyruvate (PEP) to form oxaloacetate (OAA), a four-carbon dicarboxylic acid source for the tricarboxylic acid cycle. This chain is Phosphoenolpyruvate carboxylase, found in Saccharolobus islandicus (strain L.S.2.15 / Lassen #1) (Sulfolobus islandicus).